The sequence spans 174 residues: Transcriptional repressor NrdR (174 aa).

Residues 3–34 (CPFCQHNDTRVIDSRVSEDGTTIRRRRECEAC) fold into a zinc finger. Residues 49–139 (PTVVKSDGGR…VYRSFQDVAD (91 aa)) enclose the ATP-cone domain.

It belongs to the NrdR family. It depends on Zn(2+) as a cofactor.

Functionally, negatively regulates transcription of bacterial ribonucleotide reductase nrd genes and operons by binding to NrdR-boxes. The polypeptide is Transcriptional repressor NrdR (Xanthomonas campestris pv. campestris (strain 8004)).